Here is a 509-residue protein sequence, read N- to C-terminus: Type II methyltransferase M.BsoBI (509 aa).

It belongs to the N(4)/N(6)-methyltransferase family. N(4) subfamily.

The enzyme catalyses a 2'-deoxycytidine in DNA + S-adenosyl-L-methionine = an N(4)-methyl-2'-deoxycytidine in DNA + S-adenosyl-L-homocysteine + H(+). Its function is as follows. An alpha subtype methylase that recognizes the double-stranded sequence 5'-CYCGRG-3', methylates C-1 on both strands, and protects the DNA from cleavage by the BsoBI endonuclease. In Geobacillus stearothermophilus (Bacillus stearothermophilus), this protein is Type II methyltransferase M.BsoBI.